Here is a 562-residue protein sequence, read N- to C-terminus: Arginine--tRNA ligase 1 (562 aa).

The 'HIGH' region signature appears at 122-132 (PNIAKPFSMGH).

The protein belongs to the class-I aminoacyl-tRNA synthetase family. In terms of assembly, monomer.

It is found in the cytoplasm. It catalyses the reaction tRNA(Arg) + L-arginine + ATP = L-arginyl-tRNA(Arg) + AMP + diphosphate. In Bacillus cereus (strain ZK / E33L), this protein is Arginine--tRNA ligase 1.